Here is a 503-residue protein sequence, read N- to C-terminus: MASLFDINAAAAVKDYSIKPRLSYNTVNSITGPLVILDNIRRPQYNEIVNLNLPDGSVRSGQVLEVAGHKAIVQVFEGTSGVDVRKTTIDFTGHSMRIPVSEDMLGRVFNGSGLPIDKGPNLLAEDYLDINGSPINPYARIYPEEMIQTGISSIDGLNSIARGQKIPIFSAAGLPHNEIAAQICRQAGLVKRPTKDVHDGHEDNFSIVFAAMGVNLETARFFQRDFEENGSFERVTLFLNLANDPTIERIITPRLALSASEFLAYQTEKHVLTILTDMTSYADALREVSAAREEVPGRRGYPGYMYTDLSTIYERAGRVEGRNGSITQIPILTMPNDDITHPIPDLTGYITEGQIFVDRQLHNNAIYPPINVLPSLSRLMKSAIGEGMTRNDHGDVSNQLYAMYAIGRDAASMKSVVGEEALSQEDRLALEFLGKFEKTFISQGAYENRTIFETLDLAWSLLRIFPREMLTRIPKKILDQYYSRSSAYTESSKDVIDNTPESS.

R378 contacts ATP. 4 positions are modified to phosphoserine: S491, S492, S502, and S503.

Belongs to the ATPase alpha/beta chains family. As to quaternary structure, V-ATPase is a heteromultimeric enzyme composed of a peripheral catalytic V1 complex (components A to H) attached to an integral membrane V0 proton pore complex (components: a, c, c', c'', d, e, f and VOA1). Interacts with rav1.

Its subcellular location is the vacuole membrane. In terms of biological role, non-catalytic subunit of the V1 complex of vacuolar(H+)-ATPase (V-ATPase), a multisubunit enzyme composed of a peripheral complex (V1) that hydrolyzes ATP and a membrane integral complex (V0) that translocates protons. V-ATPase is responsible for acidifying and maintaining the pH of intracellular compartments. The chain is V-type proton ATPase subunit B from Schizosaccharomyces pombe (strain 972 / ATCC 24843) (Fission yeast).